Consider the following 156-residue polypeptide: 17 kDa lipoprotein (156 aa).

Residues 1-21 (MKGSVRALCAFLGVGALGSAL) form the signal peptide. Residue C22 is the site of N-palmitoyl cysteine attachment. C22 is lipidated: S-diacylglycerol cysteine.

The protein resides in the cell membrane. The polypeptide is 17 kDa lipoprotein (tpp17) (Treponema pallidum (strain Nichols)).